The primary structure comprises 238 residues: Ribitol-5-phosphate cytidylyltransferase 2 (238 aa).

CTP contacts are provided by residues leucine 7 to glycine 10 and glycine 81 to threonine 87.

Belongs to the IspD/TarI cytidylyltransferase family. TarI subfamily.

It catalyses the reaction D-ribitol 5-phosphate + CTP + H(+) = CDP-L-ribitol + diphosphate. It functions in the pathway cell wall biogenesis; poly(ribitol phosphate) teichoic acid biosynthesis. Functionally, catalyzes the transfer of the cytidylyl group of CTP to D-ribitol 5-phosphate. This is Ribitol-5-phosphate cytidylyltransferase 2 from Staphylococcus aureus (strain MSSA476).